Consider the following 238-residue polypeptide: MQFRNRFQRFMNHRAPANGRYKPTCYEHAANCYTHAFLIVPAIVGSALLHRLSDDCWEKITAWIYGMGLCALFIVSTVFHIVSWKKSHLRTVEHCFHMCDRMVIYFFIAASYAPWLNLRELGPLASHMRWFIWLMAAGGTIYVFLYHEKYKVVELFFYLTMGFSPALVVTSMNNTDGLQELACGGLIYCLGVVFFKSDGIIPFAHAIWHLFVATAAAVHYYAIWKYLYRSPTDFIRHL.

Over 1-28 (MQFRNRFQRFMNHRAPANGRYKPTCYEH) the chain is Cytoplasmic. A helical membrane pass occupies residues 29–49 (AANCYTHAFLIVPAIVGSALL). Over 50-61 (HRLSDDCWEKIT) the chain is Lumenal. The helical transmembrane segment at 62 to 82 (AWIYGMGLCALFIVSTVFHIV) threads the bilayer. Topologically, residues 83–101 (SWKKSHLRTVEHCFHMCDR) are cytoplasmic. A helical transmembrane segment spans residues 102–122 (MVIYFFIAASYAPWLNLRELG). Proline 123 is a topological domain (lumenal). A helical membrane pass occupies residues 124 to 144 (LASHMRWFIWLMAAGGTIYVF). The Cytoplasmic portion of the chain corresponds to 145–151 (LYHEKYK). Residues 152–172 (VVELFFYLTMGFSPALVVTSM) traverse the membrane as a helical segment. At 173 to 174 (NN) the chain is on the lumenal side. The chain crosses the membrane as a helical span at residues 175–195 (TDGLQELACGGLIYCLGVVFF). Residues 196–198 (KSD) lie on the Cytoplasmic side of the membrane. Residues 199 to 219 (GIIPFAHAIWHLFVATAAAVH) form a helical membrane-spanning segment. Topologically, residues 220–238 (YYAIWKYLYRSPTDFIRHL) are lumenal.

It belongs to the ADIPOR family. Preferentially expressed in the brain.

It localises to the late endosome membrane. Its subcellular location is the lysosome membrane. In terms of biological role, is involved in the dynamics of lysosomal membranes associated with microglial activation following brain lesion. In Rattus norvegicus (Rat), this protein is Monocyte to macrophage differentiation factor.